The chain runs to 351 residues: Holliday junction branch migration complex subunit RuvB (351 aa).

The interval 1–189 (MTAHDADWSD…FGFTAHMDFY (189 aa)) is large ATPase domain (RuvB-L). ATP contacts are provided by residues Leu-28, Arg-29, Gly-70, Lys-73, Thr-74, Ser-75, 136-138 (EDF), Arg-179, Tyr-189, and Arg-226. Residue Thr-74 coordinates Mg(2+). Residues 190-260 (EPAELQQVLA…VAKAALAVYD (71 aa)) are small ATPAse domain (RuvB-S). The interval 263–351 (ELGLDRLDRA…AGLGQPGLFD (89 aa)) is head domain (RuvB-H). Residues Arg-318 and Arg-323 each contribute to the DNA site.

It belongs to the RuvB family. Homohexamer. Forms an RuvA(8)-RuvB(12)-Holliday junction (HJ) complex. HJ DNA is sandwiched between 2 RuvA tetramers; dsDNA enters through RuvA and exits via RuvB. An RuvB hexamer assembles on each DNA strand where it exits the tetramer. Each RuvB hexamer is contacted by two RuvA subunits (via domain III) on 2 adjacent RuvB subunits; this complex drives branch migration. In the full resolvosome a probable DNA-RuvA(4)-RuvB(12)-RuvC(2) complex forms which resolves the HJ.

Its subcellular location is the cytoplasm. The enzyme catalyses ATP + H2O = ADP + phosphate + H(+). Functionally, the RuvA-RuvB-RuvC complex processes Holliday junction (HJ) DNA during genetic recombination and DNA repair, while the RuvA-RuvB complex plays an important role in the rescue of blocked DNA replication forks via replication fork reversal (RFR). RuvA specifically binds to HJ cruciform DNA, conferring on it an open structure. The RuvB hexamer acts as an ATP-dependent pump, pulling dsDNA into and through the RuvAB complex. RuvB forms 2 homohexamers on either side of HJ DNA bound by 1 or 2 RuvA tetramers; 4 subunits per hexamer contact DNA at a time. Coordinated motions by a converter formed by DNA-disengaged RuvB subunits stimulates ATP hydrolysis and nucleotide exchange. Immobilization of the converter enables RuvB to convert the ATP-contained energy into a lever motion, pulling 2 nucleotides of DNA out of the RuvA tetramer per ATP hydrolyzed, thus driving DNA branch migration. The RuvB motors rotate together with the DNA substrate, which together with the progressing nucleotide cycle form the mechanistic basis for DNA recombination by continuous HJ branch migration. Branch migration allows RuvC to scan DNA until it finds its consensus sequence, where it cleaves and resolves cruciform DNA. This Mycobacterium avium (strain 104) protein is Holliday junction branch migration complex subunit RuvB.